The primary structure comprises 662 residues: MHRGIPKSSKTQTHTQQDRPPQPSTELEETRTSRARHSTTSAQRSTHYDPRTSDRPVSYTMNRTRSRKQTSHRLKNIPVHGNHEATIQHIPESVSKGARSQIERRQPNAINSGSHCTWLVLWCLGMASLFLCSKAQIHWDNLSTIGIIGTDNVHYKIMTRPSHQYLVIKLIPNASLIENCTKAELGEYEKLLNSVLEPINQALTLMTKNVKPLQSLGSGRRQRRFAGVVLAGVALGVATAAQITAGIALHQSNLNAQAIQSLRTSLEQSNKAIEEIREATQETVIAVQGVQDYVNNELVPAMQHMSCELVGQRLGLRLLRYYTELLSIFGPSLRDPISAEISIQALIYALGGEIHKILEKLGYSGSDMIAILESRGIKTKITHVDLPGKFIILSISYPTLSEVKGVIVHRLEAVSYNIGSQEWYTTVPRYIATNGYLISNFDESSCVFVSESAICSQNSLYPMSPLLQQCIRGDTSSCARTLVSGTMGNKFILSKGNIVANCASILCKCYSTSTIINQSPDKLLTFIASDTCPLVEIDGATIQVGGRQYPDMVYEGKVALGPAISLDRLDVGTNLGNALKKLDDAKVLIDSSNQILETVRRSSFNFGSLLSVPILSCTALALLLLIYCCKRRYQQTLKQHTKVDPAFKPDLTGTSKSYVRSL.

The disordered stretch occupies residues Met1–Arg73. Residues Met1 to Ala135 form the signal peptide. The span at Ser8 to Arg19 shows a compositional bias: polar residues. Residues Thr64–Arg73 show a composition bias toward basic residues. Over Gln136–Ser608 the chain is Extracellular. N-linked (GlcNAc...) asparagine; by host glycosylation is found at Asn141, Asn173, and Asn179. The segment at Phe225–Leu249 is fusion peptide. The stretch at His250–Glu278 forms a coiled coil. 4 cysteine pairs are disulfide-bonded: Cys446–Cys455, Cys470–Cys478, Cys502–Cys507, and Cys509–Cys532. Positions Asn574–Val599 form a coiled coil. The chain crosses the membrane as a helical span at residues Leu609–Cys629. Residues Lys630–Leu662 are Cytoplasmic-facing.

This sequence belongs to the paramyxoviruses fusion glycoprotein family. In terms of assembly, homotrimer of disulfide-linked F1-F2. Post-translationally, the inactive precursor F0 is glycosylated and proteolytically cleaved into F1 and F2 to be functionally active. The cleavage is mediated by cellular proteases during the transport and maturation of the polypeptide.

It localises to the virion membrane. The protein resides in the host cell membrane. Functionally, class I viral fusion protein. Under the current model, the protein has at least 3 conformational states: pre-fusion native state, pre-hairpin intermediate state, and post-fusion hairpin state. During viral and plasma cell membrane fusion, the heptad repeat (HR) regions assume a trimer-of-hairpins structure, positioning the fusion peptide in close proximity to the C-terminal region of the ectodomain. The formation of this structure appears to drive apposition and subsequent fusion of viral and plasma cell membranes. Directs fusion of viral and cellular membranes leading to delivery of the nucleocapsid into the cytoplasm. This fusion is pH independent and occurs directly at the outer cell membrane. The trimer of F1-F2 (F protein) probably interacts with H at the virion surface. Upon HN binding to its cellular receptor, the hydrophobic fusion peptide is unmasked and interacts with the cellular membrane, inducing the fusion between cell and virion membranes. Later in infection, F proteins expressed at the plasma membrane of infected cells could mediate fusion with adjacent cells to form syncytia, a cytopathic effect that could lead to tissue necrosis. This is Fusion glycoprotein F0 (F) from Canine distemper virus (strain Onderstepoort) (CDV).